Reading from the N-terminus, the 429-residue chain is Tryptophan synthase beta chain 2 (429 aa).

Lysine 111 bears the N6-(pyridoxal phosphate)lysine mark.

It belongs to the TrpB family. In terms of assembly, tetramer of two alpha and two beta chains. Pyridoxal 5'-phosphate serves as cofactor.

The enzyme catalyses (1S,2R)-1-C-(indol-3-yl)glycerol 3-phosphate + L-serine = D-glyceraldehyde 3-phosphate + L-tryptophan + H2O. It functions in the pathway amino-acid biosynthesis; L-tryptophan biosynthesis; L-tryptophan from chorismate: step 5/5. In terms of biological role, the beta subunit is responsible for the synthesis of L-tryptophan from indole and L-serine. In Saccharolobus solfataricus (strain ATCC 35092 / DSM 1617 / JCM 11322 / P2) (Sulfolobus solfataricus), this protein is Tryptophan synthase beta chain 2 (trpB2).